The chain runs to 118 residues: Large ribosomal subunit protein bL20 (118 aa).

Belongs to the bacterial ribosomal protein bL20 family.

Its function is as follows. Binds directly to 23S ribosomal RNA and is necessary for the in vitro assembly process of the 50S ribosomal subunit. It is not involved in the protein synthesizing functions of that subunit. The sequence is that of Large ribosomal subunit protein bL20 from Aeromonas hydrophila subsp. hydrophila (strain ATCC 7966 / DSM 30187 / BCRC 13018 / CCUG 14551 / JCM 1027 / KCTC 2358 / NCIMB 9240 / NCTC 8049).